A 141-amino-acid chain; its full sequence is Hemoglobin subunit alpha-D (141 aa).

A Globin domain is found at 1–141; sequence MLTAEDKKLI…VAAVLAEKYR (141 aa). The heme b site is built by histidine 58 and histidine 87.

Belongs to the globin family. Heterotetramer of two alpha-D chains and two beta chains. As to expression, red blood cells.

Its function is as follows. Involved in oxygen transport from the lung to the various peripheral tissues. This Apus apus (Common swift) protein is Hemoglobin subunit alpha-D (HBAD).